The following is a 211-amino-acid chain: Large ribosomal subunit protein mL48 (211 aa).

A mitochondrion-targeting transit peptide spans 1–27 (MSGTLGKVLGVWTNTVSKQGFSLLRFR). Position 198 is an N6-succinyllysine (Lys198).

It belongs to the mitochondrion-specific ribosomal protein mL48 family. Component of the mitochondrial ribosome large subunit (39S) which comprises a 16S rRNA and about 50 distinct proteins. Interacts with OXA1L.

The protein resides in the mitochondrion. The polypeptide is Large ribosomal subunit protein mL48 (Mrpl48) (Mus musculus (Mouse)).